The following is a 446-amino-acid chain: tRNA-2-methylthio-N(6)-dimethylallyladenosine synthase (446 aa).

The MTTase N-terminal domain maps to 3–120 (KKLFIETHGC…LPEMIDAARS (118 aa)). Residues cysteine 12, cysteine 49, cysteine 83, cysteine 157, cysteine 161, and cysteine 164 each contribute to the [4Fe-4S] cluster site. Residues 143-375 (RVDGPTAFVS…QGRIHQQGYE (233 aa)) form the Radical SAM core domain. The TRAM domain occupies 378 to 442 (RRMVGSTQRI…PHSLRGTLIE (65 aa)).

It belongs to the methylthiotransferase family. MiaB subfamily. As to quaternary structure, monomer. It depends on [4Fe-4S] cluster as a cofactor.

It is found in the cytoplasm. It catalyses the reaction N(6)-dimethylallyladenosine(37) in tRNA + (sulfur carrier)-SH + AH2 + 2 S-adenosyl-L-methionine = 2-methylsulfanyl-N(6)-dimethylallyladenosine(37) in tRNA + (sulfur carrier)-H + 5'-deoxyadenosine + L-methionine + A + S-adenosyl-L-homocysteine + 2 H(+). In terms of biological role, catalyzes the methylthiolation of N6-(dimethylallyl)adenosine (i(6)A), leading to the formation of 2-methylthio-N6-(dimethylallyl)adenosine (ms(2)i(6)A) at position 37 in tRNAs that read codons beginning with uridine. The polypeptide is tRNA-2-methylthio-N(6)-dimethylallyladenosine synthase (Pseudomonas paraeruginosa (strain DSM 24068 / PA7) (Pseudomonas aeruginosa (strain PA7))).